Consider the following 100-residue polypeptide: MTKNIEPRHYDVIVAPVVTEKATLASEHNKVLFKVAAKATKPQIKEAIEKLFDVKVKSVNTLVRKGKTKVFRGNLGSQSNTKRAIVTLEEGHRIDVTTGL.

The protein belongs to the universal ribosomal protein uL23 family. As to quaternary structure, part of the 50S ribosomal subunit. Contacts protein L29, and trigger factor when it is bound to the ribosome.

In terms of biological role, one of the early assembly proteins it binds 23S rRNA. One of the proteins that surrounds the polypeptide exit tunnel on the outside of the ribosome. Forms the main docking site for trigger factor binding to the ribosome. This chain is Large ribosomal subunit protein uL23, found in Bradyrhizobium diazoefficiens (strain JCM 10833 / BCRC 13528 / IAM 13628 / NBRC 14792 / USDA 110).